A 74-amino-acid chain; its full sequence is Probable protein E5B (74 aa).

This is Probable protein E5B from Homo sapiens (Human).